Consider the following 415-residue polypeptide: SNF1 protein kinase subunit beta-2 (415 aa).

Disordered regions lie at residues 1–43, 55–158, and 249–276; these read MGTT…EMDA, KCSD…PSEI, and EKNP…SSIA. A lipid anchor (N-myristoyl glycine) is attached at Gly-2. Positions 9 to 19 are enriched in basic residues; the sequence is AQKKQTTKKCR. The segment covering 55 to 69 has biased composition (polar residues); it reads KCSDSQDAGQPSREG. Position 66 is a phosphoserine (Ser-66). Composition is skewed to basic and acidic residues over residues 122–150 and 249–264; these read PKQD…RAKE and EKNP…EADS. The segment at 154–335 is kinase-interacting sequence (KIS); required for interaction with SNF1; it reads GPSEIKSSLM…LDRQQSNTDT (182 aa). The residue at position 298 (Ser-298) is a Phosphoserine. The association with SNF1 kinase complex (ASC) domain; required for interaction with SNF4 stretch occupies residues 336 to 415; sequence SWLTPPQLPP…QILYTPIESS (80 aa).

Belongs to the 5'-AMP-activated protein kinase beta subunit family. Component of the SNF1 kinase complex, a heterotrimeric complex composed of the catalytic alpha subunit SNF1, one of the three related beta subunits SIP1, SIP2 or GAL83, and the regulatory gamma subunit SNF4. The beta subunit serves as a bridge between the catalytic and the regulatory subunit. Interacts (via KIS domain) with SNF1. Interacts (via ASC domain) with SNF4. In terms of processing, phosphorylated by SNF1 in vitro.

It is found in the cytoplasm. Its subcellular location is the cell membrane. In terms of biological role, beta subunit of the SNF1 kinase complex, which is required for transcriptional, metabolic, and developmental adaptations in response to glucose limitation. Has a structural role, mediating heterotrimer formation, and a regulatory role, defining carbon source-regulated subcellular location and substrate specificity of the SNF1 kinase complex. Involved in the regulation of aging. Acts as a negative regulator of nuclear SNF1 activity in young cells by sequestering its activating gamma subunit at the plasma membrane. The chain is SNF1 protein kinase subunit beta-2 (SIP2) from Saccharomyces cerevisiae (strain ATCC 204508 / S288c) (Baker's yeast).